Reading from the N-terminus, the 178-residue chain is TM2 domain-containing protein biscotti (178 aa).

The first 18 residues, 1 to 18, serve as a signal peptide directing secretion; the sequence is MFPVLLLLLFFFAKETHQ. Residues 19 to 99 lie on the Extracellular side of the membrane; it reads INVDCNELQM…YHLDTTLLLS (81 aa). Asparagine 69 and asparagine 75 each carry an N-linked (GlcNAc...) asparagine glycan. The TM2 domain maps to 94 to 137; that stretch reads TTLLLSVFLGMFGVDRFYLGYPGIGLLKFCTLGGMFLGQLIDIV. Residues 100–120 traverse the membrane as a helical segment; that stretch reads VFLGMFGVDRFYLGYPGIGLL. The Cytoplasmic portion of the chain corresponds to 121 to 124; sequence KFCT. The chain crosses the membrane as a helical span at residues 125–145; sequence LGGMFLGQLIDIVLIALQVVG. The Extracellular portion of the chain corresponds to 146 to 178; sequence PADGSAYVIPYYGAGIHIVRSDNTTYRLPRDDW. Asparagine 168 is a glycosylation site (N-linked (GlcNAc...) asparagine).

The protein belongs to the TM2 family.

It localises to the membrane. Its function is as follows. Positive regulator of Notch signaling. Maternal neurogenic factor involved in Notch signaling-dependent neuroectodermal specification during early embryogenesis. Functions cooperatively with amx/TM2D3 and amrt/TM2D2. This chain is TM2 domain-containing protein biscotti, found in Drosophila melanogaster (Fruit fly).